A 364-amino-acid polypeptide reads, in one-letter code: MKVTRFMFWLFSMLLPSVKSQASETEVPCNFSRRNYTLIPEGISTNVTILDLSYNRITLNAADSRVLQMYSLLTELYLMENNIIALYNSSFRNLLNLEILNICGNSISVIQQGSFVGLNELKQLFLCQNKILQLNPDTFVPLNNLKVLNLQGNLIRLFDAPQLPHLEILTLDGNPWNCTCGLLELHNWLNTSNVTLENENMTMCSYPDELKHDSIKSAPFTTECHSTFISTITEDFQSTRNSSFNSSSHNLTWTSEHEPLGKSWAFLVGVVATVLLTSLLIFIAIKCPVWYNILLSYNHHRLEEHEAETYENGLTRNPSSLSQITDTNSEDTTVIFEQLHAFVVDDDGFIEDRYIDINEVHEEK.

A signal peptide spans 1–20; sequence MKVTRFMFWLFSMLLPSVKS. Over 21–264 the chain is Extracellular; sequence QASETEVPCN…SEHEPLGKSW (244 aa). N-linked (GlcNAc...) asparagine glycans are attached at residues Asn-30, Asn-35, Asn-46, and Asn-88. LRR repeat units follow at residues 44 to 69, 70 to 93, 94 to 117, 118 to 141, 143 to 163, and 164 to 190; these read STNVTILDLSYNRITLNAADSRVLQM, YSLLTELYLMENNIIALYNSSFRN, LLNLEILNICGNSISVIQQGSFVG, LNELKQLFLCQNKILQLNPDTFVP, NNLKVLNLQGNLIRLFDAPQL, and PHLEILTLDGNPWNCTCGLLELHNWLN. Positions 174–225 constitute an LRRCT domain; the sequence is NPWNCTCGLLELHNWLNTSNVTLENENMTMCSYPDELKHDSIKSAPFTTECH. 7 N-linked (GlcNAc...) asparagine glycosylation sites follow: Asn-177, Asn-190, Asn-193, Asn-200, Asn-241, Asn-245, and Asn-250. A helical membrane pass occupies residues 265-285; it reads AFLVGVVATVLLTSLLIFIAI. Over 286–364 the chain is Cytoplasmic; sequence KCPVWYNILL…IDINEVHEEK (79 aa).

As to quaternary structure, interacts with TRAF2 and TRAF6. Strongly expressed in kidney, also expressed in spleen, intestine and colon. Highly expressed in epithelial cells. In kidney, mainly expressed in renal collecting duct epithelial cells.

It localises to the membrane. With respect to regulation, activated by TLR ligands such as LPS, bacterial DNA and peptidoglycan. Its function is as follows. Pathogen-recognition receptor which mediates the activation of TRAF2- and TRAF6 NF-kappa-B signaling pathways and induces the expression of pro-inflammatory cytokines. In kidney, prevents infection by uropathogenic bacteria by inducing the production of cytokines, chemokines and antimicrobial substances. In gut, involved in host-microbiota interactions, plays a critical role in promoting the recruitment of immune cells and intestinal inflammation. The polypeptide is Leucine-rich repeat-containing protein 19 (Mus musculus (Mouse)).